The sequence spans 382 residues: Galactokinase (382 aa).

34-37 (EHTD) is a substrate binding site. Position 124–130 (124–130 (GAGLSSS)) interacts with ATP. The Mg(2+) site is built by Ser130 and Glu162. Asp174 functions as the Proton acceptor in the catalytic mechanism. Tyr223 lines the substrate pocket.

This sequence belongs to the GHMP kinase family. GalK subfamily.

The protein localises to the cytoplasm. The enzyme catalyses alpha-D-galactose + ATP = alpha-D-galactose 1-phosphate + ADP + H(+). The protein operates within carbohydrate metabolism; galactose metabolism. Its function is as follows. Catalyzes the transfer of the gamma-phosphate of ATP to D-galactose to form alpha-D-galactose-1-phosphate (Gal-1-P). The chain is Galactokinase from Salmonella gallinarum (strain 287/91 / NCTC 13346).